The chain runs to 251 residues: Triosephosphate isomerase (251 aa).

9 to 11 serves as a coordination point for substrate; the sequence is NWK. Histidine 95 functions as the Electrophile in the catalytic mechanism. Glutamate 167 acts as the Proton acceptor in catalysis. Residues glycine 173, serine 213, and 234–235 contribute to the substrate site; that span reads GG. Residue serine 213 is modified to Phosphoserine.

It belongs to the triosephosphate isomerase family. As to quaternary structure, homodimer.

The protein resides in the cytoplasm. The enzyme catalyses D-glyceraldehyde 3-phosphate = dihydroxyacetone phosphate. It participates in carbohydrate biosynthesis; gluconeogenesis. The protein operates within carbohydrate degradation; glycolysis; D-glyceraldehyde 3-phosphate from glycerone phosphate: step 1/1. Its function is as follows. Involved in the gluconeogenesis. Catalyzes stereospecifically the conversion of dihydroxyacetone phosphate (DHAP) to D-glyceraldehyde-3-phosphate (G3P). The sequence is that of Triosephosphate isomerase from Bacillus anthracis.